The chain runs to 113 residues: Colipase (113 aa).

Residues 1–18 (MEKVLVLLLVSLLAVAYA) form the signal peptide. Positions 19–23 (APGPR) are cleaved as a propeptide — enterostatin, activation peptide. 5 disulfide bridges follow: cysteine 35-cysteine 46, cysteine 41-cysteine 57, cysteine 45-cysteine 79, cysteine 67-cysteine 87, and cysteine 81-cysteine 105.

It belongs to the colipase family. Forms a 1:1 stoichiometric complex with pancreatic lipase. In terms of tissue distribution, expressed by the pancreas.

It is found in the secreted. Colipase is a cofactor of pancreatic lipase. It allows the lipase to anchor itself to the lipid-water interface. Without colipase the enzyme is washed off by bile salts, which have an inhibitory effect on the lipase. Its function is as follows. Enterostatin has a biological activity as a satiety signal. The chain is Colipase from Mus musculus (Mouse).